The chain runs to 719 residues: DNA ligase (719 aa).

NAD(+) contacts are provided by residues 42-46 (DAEYD), 91-92 (SL), and E125. Residue K127 is the N6-AMP-lysine intermediate of the active site. NAD(+) is bound by residues R148, E184, K300, and K324. The Zn(2+) site is built by C429, C432, C447, and C453. Residues 638–719 (TASSPIAGKT…WLQLIEGSYI (82 aa)) enclose the BRCT domain.

The protein belongs to the NAD-dependent DNA ligase family. LigA subfamily. Mg(2+) serves as cofactor. Requires Mn(2+) as cofactor.

The enzyme catalyses NAD(+) + (deoxyribonucleotide)n-3'-hydroxyl + 5'-phospho-(deoxyribonucleotide)m = (deoxyribonucleotide)n+m + AMP + beta-nicotinamide D-nucleotide.. Its function is as follows. DNA ligase that catalyzes the formation of phosphodiester linkages between 5'-phosphoryl and 3'-hydroxyl groups in double-stranded DNA using NAD as a coenzyme and as the energy source for the reaction. It is essential for DNA replication and repair of damaged DNA. The polypeptide is DNA ligase (Bartonella quintana (strain Toulouse) (Rochalimaea quintana)).